A 246-amino-acid chain; its full sequence is Histone H1 (246 aa).

2 disordered regions span residues 1–51 (MATD…PTHL) and 105–246 (GGKL…KAKK). Positions 9–34 (PAPLVDAAPEAPADAPAAPAADANAA) are enriched in low complexity. The segment covering 35–47 (KAKKATAPKKRAS) has biased composition (basic residues). Residues 49–119 (THLPYAEMVS…KVKNSYKLSS (71 aa)) form the H15 domain. 2 stretches are compositionally biased toward basic residues: residues 129–189 (AAPK…KAKP) and 198–208 (PLAKKAGRAKA). Residues 224 to 235 (KKAAPSKKAATP) are compositionally biased toward low complexity.

This sequence belongs to the histone H1/H5 family.

The protein resides in the nucleus. The protein localises to the chromosome. Histones H1 are necessary for the condensation of nucleosome chains into higher-order structures. This chain is Histone H1, found in Zea mays (Maize).